We begin with the raw amino-acid sequence, 255 residues long: 5-oxoprolinase subunit A (255 aa).

This sequence belongs to the LamB/PxpA family. In terms of assembly, forms a complex composed of PxpA, PxpB and PxpC.

The enzyme catalyses 5-oxo-L-proline + ATP + 2 H2O = L-glutamate + ADP + phosphate + H(+). Functionally, catalyzes the cleavage of 5-oxoproline to form L-glutamate coupled to the hydrolysis of ATP to ADP and inorganic phosphate. The polypeptide is 5-oxoprolinase subunit A (Pyrococcus furiosus (strain ATCC 43587 / DSM 3638 / JCM 8422 / Vc1)).